The chain runs to 208 residues: Capsid protein (208 aa).

Positions 1–12 are enriched in basic and acidic residues; that stretch reads MPPKRQNTETRK. The interval 1-23 is disordered; the sequence is MPPKRQNTETRKARQNRARRSRQ. Residues 13–22 show a composition bias toward basic residues; the sequence is ARQNRARRSR.

The protein resides in the virion. Its function is as follows. Capsid protein self-assembles to form a quasi spherical capsid, about 25-35 nm. The protein is Capsid protein of Pelargonium zonate spot virus (isolate Tomato/Italy/1982) (PZSV).